Reading from the N-terminus, the 115-residue chain is Large ribosomal subunit protein bL19 (115 aa).

This sequence belongs to the bacterial ribosomal protein bL19 family.

Its function is as follows. This protein is located at the 30S-50S ribosomal subunit interface and may play a role in the structure and function of the aminoacyl-tRNA binding site. The sequence is that of Large ribosomal subunit protein bL19 from Clostridium tetani (strain Massachusetts / E88).